Consider the following 537-residue polypeptide: Hydroxylamine reductase (537 aa).

4 residues coordinate [4Fe-4S] cluster: Cys-3, Cys-6, Cys-15, and Cys-21. Residues His-239, Glu-263, Cys-307, Cys-393, Cys-421, Cys-446, Glu-480, and Lys-482 each contribute to the hybrid [4Fe-2O-2S] cluster site. Residue Cys-393 is modified to Cysteine persulfide.

The protein belongs to the HCP family. [4Fe-4S] cluster serves as cofactor. Requires hybrid [4Fe-2O-2S] cluster as cofactor.

Its subcellular location is the cytoplasm. The enzyme catalyses A + NH4(+) + H2O = hydroxylamine + AH2 + H(+). Catalyzes the reduction of hydroxylamine to form NH(3) and H(2)O. This Lawsonia intracellularis (strain PHE/MN1-00) protein is Hydroxylamine reductase.